The sequence spans 111 residues: Universal stress protein B (111 aa).

The next 2 helical transmembrane spans lie at 1–21 (MIST…NMAR) and 90–110 (FILT…LLIW).

This sequence belongs to the universal stress protein B family.

It localises to the cell inner membrane. The protein is Universal stress protein B of Escherichia fergusonii (strain ATCC 35469 / DSM 13698 / CCUG 18766 / IAM 14443 / JCM 21226 / LMG 7866 / NBRC 102419 / NCTC 12128 / CDC 0568-73).